Here is a 62-residue protein sequence, read N- to C-terminus: Potassium channel toxin kappa-KTx 1.4 (62 aa).

The first 26 residues, 1–26, serve as a signal peptide directing secretion; it reads MKSCLINVSLLILLLLPILGYASVNA. Positions 27–38 are excised as a propeptide; the sequence is ESIDGENDFEEE. Intrachain disulfides connect Cys-43–Cys-61 and Cys-47–Cys-57.

Belongs to the short scorpion toxin superfamily. Potassium channel inhibitor kappa-KTx family. Kappa-KTx 1 subfamily. In terms of tissue distribution, expressed by the venom gland.

It is found in the secreted. Its function is as follows. Shows structural homology with WaTx suggesting that it acts as a cell-penetrating peptide (CPP) with defensive purpose that induces pain by specifically activating mammalian sensory neuron TRPA1 channels. Has no effect on the voltage-gated potassium channels tested. The protein is Potassium channel toxin kappa-KTx 1.4 of Heterometrus petersii (Asian forest scorpion).